Consider the following 353-residue polypeptide: Probable G-protein coupled receptor 139 (353 aa).

At 1–29 (MEHTHAHLAANSSLSWWSPGSACGLGFVP) the chain is on the extracellular side. N11 carries N-linked (GlcNAc...) asparagine glycosylation. A helical transmembrane segment spans residues 30-50 (VVYYSLLLCLGLPANILTVII). At 51–65 (LSQLVARRQKSSYNY) the chain is on the cytoplasmic side. Residues 66-86 (LLALAAADILVLFFIVFVDFL) form a helical membrane-spanning segment. Residues 87-102 (LEDFILNMQMPQVPDK) are Extracellular-facing. A helical transmembrane segment spans residues 103-123 (IIEVLEFSSIHTSIWITVPLT). Residues 124–148 (IDRYIAVCHPLKYHTVSYPARTRKV) are Cytoplasmic-facing. Residues 149–169 (IVSVYITCFLTSIPYYWWPNI) form a helical membrane-spanning segment. Residues 170 to 181 (WTEDYISTSVHH) are Extracellular-facing. The helical transmembrane segment at 182–202 (VLIWIHCFTVYLVPCSIFFIL) threads the bilayer. The Cytoplasmic segment spans residues 203–228 (NSIIVYKLRRKSNFRLRGYSTGKTTA). A helical transmembrane segment spans residues 229-249 (ILFTITSIFATLWAPRIIMIL). The Extracellular portion of the chain corresponds to 250–268 (YHLYGAPIQNRWLVHIMSD). The helical transmembrane segment at 269-289 (IANMLALLNTAINFFLYCFIS) threads the bilayer. The Cytoplasmic segment spans residues 290–353 (KRFRTMAAAT…KNGKPIKVSP (64 aa)).

Belongs to the G-protein coupled receptor 1 family. In terms of tissue distribution, expressed almost exclusively in the brain. Detected at very low levels in the peripheral tissues.

The protein resides in the cell membrane. Functionally, orphan receptor. Seems to act through a G(q/11)-mediated pathway. This chain is Probable G-protein coupled receptor 139 (GPR139), found in Homo sapiens (Human).